The primary structure comprises 302 residues: ATP synthase gamma chain (302 aa).

Belongs to the ATPase gamma chain family. F-type ATPases have 2 components, CF(1) - the catalytic core - and CF(0) - the membrane proton channel. CF(1) has five subunits: alpha(3), beta(3), gamma(1), delta(1), epsilon(1). CF(0) has three main subunits: a, b and c.

The protein resides in the cell membrane. Functionally, produces ATP from ADP in the presence of a proton gradient across the membrane. The gamma chain is believed to be important in regulating ATPase activity and the flow of protons through the CF(0) complex. This is ATP synthase gamma chain from Kineococcus radiotolerans (strain ATCC BAA-149 / DSM 14245 / SRS30216).